The chain runs to 44 residues: uncharacterized protein (44 aa).

It is found in the plastid. The protein localises to the chloroplast. This is an uncharacterized protein from Trieres chinensis (Marine centric diatom).